Reading from the N-terminus, the 129-residue chain is Capsid protein (129 aa).

A viral RNA-binding region spans residues 31–104 (EWISSNSRSQ…FATNSDCELI (74 aa)).

The protein belongs to the Leviviricetes capsid protein family. As to quaternary structure, homodimer. The capsid proteins form dimers that assemble by group of 5. Twelve such pentamers are linked together with free dimers. The homodimers binds to the viral RNA via an operator hairpin, but also to many other RNA sequences in the viral genome; this interaction probably shifts the virus from the replicative to the assembly phase and ensures specific encapsidation of the viral genome.

Its subcellular location is the virion. Its function is as follows. Capsid protein self-assembles to form an icosahedral capsid with a T=3 symmetry, about 26 nm in diameter, and consisting of 89 capsid proteins dimers (178 capsid proteins). Involved in viral genome encapsidation through the interaction between a capsid protein dimer and the multiple packaging signals present in the RNA genome. The capsid also contains 1 copy of the A2 maturation protein. Functionally, acts as a translational repressor of viral replicase synthesis late in infection. This latter function is the result of capsid protein interaction with an RNA hairpin which contains the replicase ribosome-binding site. This chain is Capsid protein, found in Enterobacteria phage f2 (Bacteriophage f2).